The primary structure comprises 352 residues: uncharacterized protein (352 aa).

This is an uncharacterized protein from Thermoproteus tenax (TTV1).